We begin with the raw amino-acid sequence, 122 residues long: uncharacterized protein (122 aa).

Over residues Met-1–Arg-15 the composition is skewed to basic and acidic residues. Residues Met-1 to Ser-49 are disordered. Over residues Leu-16–Pro-32 the composition is skewed to low complexity.

This is an uncharacterized protein from Homo sapiens (Human).